The primary structure comprises 515 residues: Bifunctional pantoate ligase/cytidylate kinase (515 aa).

The segment at 1-279 (MKVVETVARL…VGSTRLIDNV (279 aa)) is pantoate--beta-alanine ligase. 31-38 (MGALHEGH) serves as a coordination point for ATP. The Proton donor role is filled by histidine 38. Glutamine 62 is a (R)-pantoate binding site. Glutamine 62 contacts beta-alanine. Residue 149-152 (GQKD) participates in ATP binding. Glutamine 155 contacts (R)-pantoate. Residues valine 178 and 186–189 (LSSR) each bind ATP. The tract at residues 280–515 (VLGQHHERRP…LYRDKVGGSV (236 aa)) is cytidylate kinase.

This sequence in the N-terminal section; belongs to the pantothenate synthetase family. In the C-terminal section; belongs to the cytidylate kinase family. Type 1 subfamily.

It localises to the cytoplasm. It carries out the reaction (R)-pantoate + beta-alanine + ATP = (R)-pantothenate + AMP + diphosphate + H(+). It catalyses the reaction CMP + ATP = CDP + ADP. The catalysed reaction is dCMP + ATP = dCDP + ADP. It participates in cofactor biosynthesis; (R)-pantothenate biosynthesis; (R)-pantothenate from (R)-pantoate and beta-alanine: step 1/1. Functionally, catalyzes the condensation of pantoate with beta-alanine in an ATP-dependent reaction via a pantoyl-adenylate intermediate. Catalyzes the transfer of a phosphate group from ATP to either CMP or dCMP to form CDP or dCDP and ADP, respectively. The protein is Bifunctional pantoate ligase/cytidylate kinase of Gloeobacter violaceus (strain ATCC 29082 / PCC 7421).